The chain runs to 423 residues: POU domain, class 5, transcription factor 1.3 (423 aa).

Residues 85–211 (GALSSGDPSP…GSGNEEDGTT (127 aa)) form a disordered region. Residues 94–110 (PEGRNEEDHGSISEERS) show a composition bias toward basic and acidic residues. Composition is skewed to polar residues over residues 111–120 (SGTPSPNSPM), 156–173 (PQQSDCSPTASLESGASN), and 194–203 (PSPNNASFGS). A POU-specific domain is found at 207 to 281 (EDGTTLEEME…LLEQWLGEAE (75 aa)). The segment at residues 301–360 (KRKMRTCFDSVLKGRLEGHFMCNQKPGARELAEIAKELGLEKDVVRVWFCNRRQKEKSKS) is a DNA-binding region (homeobox).

It belongs to the POU transcription factor family. Class-5 subfamily. As to quaternary structure, interacts with the transcription factors tcf7l1/tcf3 and vegt.

The protein localises to the nucleus. Its function is as follows. Transcription factor that binds to the octamer motif (5'-ATTTGCAT-3'). Antagonizes the activity of nodal/activin signaling during gastrulation to suppress mesendoderm formation. Acts maternally to inhibit vegt and beta-catenin-activated gene transcription, probably by forming a transcriptional repression complex on the promoters of target genes. Binds to an octamer motif in interspersed RNA. The protein is POU domain, class 5, transcription factor 1.3 (pou5f1.3) of Xenopus tropicalis (Western clawed frog).